Here is a 426-residue protein sequence, read N- to C-terminus: Docking protein 3 (426 aa).

The 112-residue stretch at 4–115 (PVKDGIIYVQ…WIEQLCQLAF (112 aa)) folds into the PH domain. The IRS-type PTB domain occupies 145–249 (DLTEFPVLVL…ACQQQGQESP (105 aa)). The interval 243–282 (QQGQESPQPSAQGLSNQPWGAEAEDPQCSPTLGRAHSGSH) is disordered. The span at 247–260 (ESPQPSAQGLSNQP) shows a compositional bias: polar residues. Y331 carries the phosphotyrosine modification. Residues 357–426 (GCRQAPEGHS…RDGPGARDWS (70 aa)) form a disordered region. Residues 402-411 (KPQRTLRAKL) are compositionally biased toward basic residues.

The protein belongs to the DOK family. Type A subfamily. In terms of assembly, homooligomer. Interacts with GRB2 and INPP5D/SHIP. In terms of processing, tyrosine-phosphorylated in the presence of GRB2.

It localises to the cytoplasm. The protein localises to the cell membrane. Functionally, DOK proteins are enzymatically inert adaptor or scaffolding proteins. They provide a docking platform for the assembly of multimolecular signaling complexes. Plays a role as negative regulator of the mobilization of calcium ions and of calcium signaling. The polypeptide is Docking protein 3 (DOK3) (Gallus gallus (Chicken)).